The primary structure comprises 1413 residues: Zinc finger protein 609 (1413 aa).

Disordered stretches follow at residues Met1–Glu26, Gln47–Ser196, Arg354–Leu484, Ala517–Ala659, and Pro695–Asp765. Phosphoserine occurs at positions 358, 361, and 379. Thr381 carries the post-translational modification Phosphothreonine. The span at Ala386 to Ala405 shows a compositional bias: low complexity. Ser413, Ser433, Ser446, Ser452, Ser467, and Ser470 each carry phosphoserine. Polar residues predominate over residues Ala423 to Ala437. Lys479 is covalently cross-linked (Glycyl lysine isopeptide (Lys-Gly) (interchain with G-Cter in SUMO2)). Residues Ile495–His520 form a C2H2-type zinc finger. The span at Ala519 to Ala529 shows a compositional bias: basic and acidic residues. Residues Ser533, Ser575, and Ser577 each carry the phosphoserine modification. The segment covering Ser625–Pro648 has biased composition (basic and acidic residues). A compositionally biased stretch (basic residues) spans Asp725 to Asp735. The residue at position 742 (Ser742) is a Phosphoserine. Thr745 bears the Phosphothreonine mark. Residues Cys750–Ala763 show a composition bias toward basic and acidic residues. Phosphoserine is present on Ser757. Lys788 participates in a covalent cross-link: Glycyl lysine isopeptide (Lys-Gly) (interchain with G-Cter in SUMO2). Positions Phe797–Ala843 are enriched in polar residues. Disordered stretches follow at residues Phe797–Gln962, Tyr1004–Glu1127, Ile1154–Thr1221, and Ser1273–His1369. Ser803 is subject to Phosphoserine. Thr822 is subject to Phosphothreonine. Residues Ser841, Ser845, and Ser848 each carry the phosphoserine modification. A compositionally biased stretch (basic and acidic residues) spans Gly854–Lys875. Residues Tyr902–Ala916 show a composition bias toward polar residues. The span at Thr925–Glu949 shows a compositional bias: basic and acidic residues. A compositionally biased stretch (polar residues) spans Leu950–Gln962. Over residues Gly1022 to Gln1044 the composition is skewed to basic and acidic residues. Position 1057 is a phosphoserine (Ser1057). Lys1063 participates in a covalent cross-link: Glycyl lysine isopeptide (Lys-Gly) (interchain with G-Cter in SUMO2). Composition is skewed to basic and acidic residues over residues Leu1099–Glu1115, Ile1154–Thr1189, and Pro1197–Pro1210. Lys1155 participates in a covalent cross-link: Glycyl lysine isopeptide (Lys-Gly) (interchain with G-Cter in SUMO2). Positions Pro1288–Ser1298 are enriched in polar residues. Lys1299 is covalently cross-linked (Glycyl lysine isopeptide (Lys-Gly) (interchain with G-Cter in SUMO2)). Residues Gly1330–Gly1348 are compositionally biased toward gly residues.

As to quaternary structure, interacts (via N-terminus) with NIPBL. Interacts with the multiprotein complex Integrator. As to expression, expressed in myoblasts. Expressed in neurons in various brain regions, including striatum, prefrontal cortex, olfactory bulb, midbrain, cerebellum and hippocampus. Expressed in neural stem cells (at protein level). Expressed in thymocytes.

The protein localises to the nucleus. Functionally, transcription factor, which activates RAG1, and possibly RAG2, transcription. Through the regulation of RAG1/2 expression, may regulate thymocyte maturation. Along with NIPBL and the multiprotein complex Integrator, promotes cortical neuron migration during brain development by regulating the transcription of crucial genes in this process. Preferentially binds promoters containing paused RNA polymerase II. Up-regulates the expression of SEMA3A, NRP1, PLXND1 and GABBR2 genes, among others. Involved in regulation of myoblast proliferation during myogenesis. This chain is Zinc finger protein 609 (Znf609), found in Mus musculus (Mouse).